Here is a 310-residue protein sequence, read N- to C-terminus: MTEQIQERTKAQQYNFNKLQKRIRRNTGQAIADFNMIEDGDRIMVCLSGGKDSFTMLDILISLQKSAPISFSLVAVNLDQKQPGFPAHVLPEYLESLGVEYKIVEEDTYSIVQDKIPEGKTTCSLCSRLRRGILYRTAKELGATKIALGHHRDDILETLFLNMFYGGKMKGMPPKLVSDNGEHVVIRPLAYCREKDIIKYSDMAGYPIIPCNLCGSQPNLQRQNIKQMLNDWDKRFPGRIETMFRAMQNVVPSHLADFELFDFKSINKDSGVINGGDIGFDKEEMPVATVEDEDMVQEFDPSLKLDVTNI.

The PP-loop motif signature appears at 48-53; that stretch reads SGGKDS. [4Fe-4S] cluster contacts are provided by cysteine 123, cysteine 126, and cysteine 214.

The protein belongs to the TtcA family. In terms of assembly, homodimer. The cofactor is Mg(2+). Requires [4Fe-4S] cluster as cofactor.

It is found in the cytoplasm. The catalysed reaction is cytidine(32) in tRNA + S-sulfanyl-L-cysteinyl-[cysteine desulfurase] + AH2 + ATP = 2-thiocytidine(32) in tRNA + L-cysteinyl-[cysteine desulfurase] + A + AMP + diphosphate + H(+). It functions in the pathway tRNA modification. In terms of biological role, catalyzes the ATP-dependent 2-thiolation of cytidine in position 32 of tRNA, to form 2-thiocytidine (s(2)C32). The sulfur atoms are provided by the cysteine/cysteine desulfurase (IscS) system. The polypeptide is tRNA-cytidine(32) 2-sulfurtransferase (Vibrio vulnificus (strain CMCP6)).